Here is a 394-residue protein sequence, read N- to C-terminus: Elongation factor Tu (394 aa).

The 195-residue stretch at 10 to 204 folds into the tr-type G domain; the sequence is KPHVNVGTIG…ALDSYIPEPE (195 aa). Residues 19 to 26 are G1; the sequence is GHVDHGKT. 19–26 lines the GTP pocket; it reads GHVDHGKT. Thr26 contacts Mg(2+). The segment at 60–64 is G2; the sequence is GITIS. Residues 81 to 84 form a G3 region; the sequence is DCPG. GTP is bound by residues 81-85 and 136-139; these read DCPGH and NKCD. Residues 136-139 form a G4 region; that stretch reads NKCD. A G5 region spans residues 174–176; sequence SAL.

It belongs to the TRAFAC class translation factor GTPase superfamily. Classic translation factor GTPase family. EF-Tu/EF-1A subfamily. As to quaternary structure, monomer.

It is found in the cytoplasm. It catalyses the reaction GTP + H2O = GDP + phosphate + H(+). Its function is as follows. GTP hydrolase that promotes the GTP-dependent binding of aminoacyl-tRNA to the A-site of ribosomes during protein biosynthesis. This Pseudoalteromonas atlantica (strain T6c / ATCC BAA-1087) protein is Elongation factor Tu.